A 522-amino-acid polypeptide reads, in one-letter code: MYTPIPANTPAPTAPTSSMTSNSSSASNANTTSSSGINPRNRASGTPSNERARPASGISSFLNTFGIRQNSQTASSSAAPDQRLFGTTPSNSHMSVAMESIDTAPQQQEPRLHHPIQMPLSAQFHVHRNYQLPISISLTAPTTTDHQQSSAHNFEGNNVGNVQESLNQRQPNGTNNTTTSIISMAPAATTRNIVGGADGSTIVNNSQEMYKNLRHLIYAANQPNGTEILHLDLPATSAEESNNMFNVDEVTLKQRKDKHGLFSIRLTPFIDSSSTTNQGLFFEPIIRKAGPGSQLVIGRYTERVRDAISKIPEQYHPVVFKSKVVSRTHGCFKVDSQGNWYIKDVKSSSGTFLNHQRLSPASSLSKDTPLRDGDILQLGMDFRGGTEEIYRCVRMRIELNRSWKLKANSFNKEALQRLQNLQKLTTGIEEEDCSICLCKIKPCQAIFISPCAHSWHFRCVRRLVMLSYPQFVCPNCRSSCDLEASFESSDEEDESDVESEGDQLVDQLSVLMETSKDVDSHP.

Disordered stretches follow at residues 1–56 (MYTP…RPAS) and 69–92 (QNSQ…PSNS). The segment covering 14–35 (APTSSMTSNSSSASNANTTSSS) has biased composition (low complexity). Polar residues predominate over residues 36 to 49 (GINPRNRASGTPSN). Residue Ser206 is modified to Phosphoserine. Glycyl lysine isopeptide (Lys-Gly) (interchain with G-Cter in ubiquitin) cross-links involve residues Lys211, Lys256, Lys258, Lys288, Lys310, Lys333, Lys343, Lys346, Lys366, Lys406, Lys412, and Lys423. The region spanning 295–358 (LVIGRYTERV…SGTFLNHQRL (64 aa)) is the FHA domain. An RING-type zinc finger spans residues 433-477 (CSICLCKIKPCQAIFISPCAHSWHFRCVRRLVMLSYPQFVCPNCR).

This sequence belongs to the DMA1 family. In terms of processing, UBC4-dependent autoubiquitination occurs at Lys-211, Lys-258, Lys-288, Lys-310, Lys-333, Lys-343, Lys-346, Lys-366, Lys-406, Lys-412 and Lys-423. UBC4-dependent autoubiquitination is responsible for DMA2 turnover. UBC13/MMS2-dependent autoubiquitination occurs at Lys-258, Lys-310, Lys-346 and Lys-366. Lys-211, Lys-256, Lys-288, Lys-310, Lys-343, Lys-258, Lys-366 and Lys-412 are also ubiquitinated in trans by DMA1 E3 ligase in association with UBC4.

The protein localises to the cytoplasm. The catalysed reaction is S-ubiquitinyl-[E2 ubiquitin-conjugating enzyme]-L-cysteine + [acceptor protein]-L-lysine = [E2 ubiquitin-conjugating enzyme]-L-cysteine + N(6)-ubiquitinyl-[acceptor protein]-L-lysine.. Its function is as follows. E3 ubiquitin-protein ligase which functions in cell cycle retarding in conjunction with the UBC4 and UBC13/MMS2 complex, 2 E2 ubiquitin conjugating enzymes. Involved in nutritional control of the cell cycle. Required for proper spindle positioning, likely regulating septin ring deposition at the bud neck. The chain is E3 ubiquitin-protein ligase DMA2 (DMA2) from Saccharomyces cerevisiae (strain ATCC 204508 / S288c) (Baker's yeast).